The sequence spans 667 residues: uncharacterized protein (667 aa).

This is an uncharacterized protein from Magallana gigas (Pacific oyster).